A 492-amino-acid chain; its full sequence is N-succinylglutamate 5-semialdehyde dehydrogenase (492 aa).

Position 220 to 225 (220 to 225 (GSANTG)) interacts with NAD(+). Residues glutamate 243 and cysteine 277 contribute to the active site.

This sequence belongs to the aldehyde dehydrogenase family. AstD subfamily.

The catalysed reaction is N-succinyl-L-glutamate 5-semialdehyde + NAD(+) + H2O = N-succinyl-L-glutamate + NADH + 2 H(+). The protein operates within amino-acid degradation; L-arginine degradation via AST pathway; L-glutamate and succinate from L-arginine: step 4/5. Catalyzes the NAD-dependent reduction of succinylglutamate semialdehyde into succinylglutamate. This chain is N-succinylglutamate 5-semialdehyde dehydrogenase, found in Shigella flexneri.